The sequence spans 184 residues: ATP synthase subunit b, chloroplastic (184 aa).

A helical membrane pass occupies residues Leu-31–Leu-53.

The protein belongs to the ATPase B chain family. In terms of assembly, F-type ATPases have 2 components, F(1) - the catalytic core - and F(0) - the membrane proton channel. F(1) has five subunits: alpha(3), beta(3), gamma(1), delta(1), epsilon(1). F(0) has four main subunits: a(1), b(1), b'(1) and c(10-14). The alpha and beta chains form an alternating ring which encloses part of the gamma chain. F(1) is attached to F(0) by a central stalk formed by the gamma and epsilon chains, while a peripheral stalk is formed by the delta, b and b' chains.

The protein localises to the plastid. The protein resides in the chloroplast thylakoid membrane. Its function is as follows. F(1)F(0) ATP synthase produces ATP from ADP in the presence of a proton or sodium gradient. F-type ATPases consist of two structural domains, F(1) containing the extramembraneous catalytic core and F(0) containing the membrane proton channel, linked together by a central stalk and a peripheral stalk. During catalysis, ATP synthesis in the catalytic domain of F(1) is coupled via a rotary mechanism of the central stalk subunits to proton translocation. Functionally, component of the F(0) channel, it forms part of the peripheral stalk, linking F(1) to F(0). In Staurastrum punctulatum (Green alga), this protein is ATP synthase subunit b, chloroplastic.